The sequence spans 70 residues: Large ribosomal subunit protein eL38 (70 aa).

This sequence belongs to the eukaryotic ribosomal protein eL38 family.

This chain is Large ribosomal subunit protein eL38 (RpL38), found in Anopheles gambiae (African malaria mosquito).